Consider the following 263-residue polypeptide: MTHQQPFIAVIPARLASTRLPNKPLADLGGKPMVVRVAERAREAGAQQVLVASDAQSVLDAARDHGFEAVLTRADHPSGTDRLAEVAATFGWSDDTVVVNVQGDEPLIDPMLVRDVASHLAAHPDCAIATAAHPIHDAADVFNPNVVKVALDARNVAMYFSRAPIPWSRDAYLPHWPDVATMPPPAFPVHRHIGLYAYRARFLRTYPSLAQAPVEQAEQLEQLRAMWHGERIAVLITEHAPEAGIDTPADLARVQALFRPGSK.

Belongs to the KdsB family.

It is found in the cytoplasm. It catalyses the reaction 3-deoxy-alpha-D-manno-oct-2-ulosonate + CTP = CMP-3-deoxy-beta-D-manno-octulosonate + diphosphate. Its pathway is nucleotide-sugar biosynthesis; CMP-3-deoxy-D-manno-octulosonate biosynthesis; CMP-3-deoxy-D-manno-octulosonate from 3-deoxy-D-manno-octulosonate and CTP: step 1/1. The protein operates within bacterial outer membrane biogenesis; lipopolysaccharide biosynthesis. Its function is as follows. Activates KDO (a required 8-carbon sugar) for incorporation into bacterial lipopolysaccharide in Gram-negative bacteria. This Burkholderia ambifaria (strain MC40-6) protein is 3-deoxy-manno-octulosonate cytidylyltransferase 1.